A 261-amino-acid chain; its full sequence is 4-hydroxy-tetrahydrodipicolinate reductase (261 aa).

Residue 8-13 (GYKGRM) coordinates NAD(+). Residue arginine 36 participates in NADP(+) binding. NAD(+) is bound by residues 95–97 (GTT) and 121–124 (APNF). The active-site Proton donor/acceptor is histidine 151. (S)-2,3,4,5-tetrahydrodipicolinate is bound at residue histidine 152. The active-site Proton donor is the lysine 155. 161-162 (GT) contacts (S)-2,3,4,5-tetrahydrodipicolinate.

The protein belongs to the DapB family.

It is found in the cytoplasm. It carries out the reaction (S)-2,3,4,5-tetrahydrodipicolinate + NAD(+) + H2O = (2S,4S)-4-hydroxy-2,3,4,5-tetrahydrodipicolinate + NADH + H(+). The enzyme catalyses (S)-2,3,4,5-tetrahydrodipicolinate + NADP(+) + H2O = (2S,4S)-4-hydroxy-2,3,4,5-tetrahydrodipicolinate + NADPH + H(+). It participates in amino-acid biosynthesis; L-lysine biosynthesis via DAP pathway; (S)-tetrahydrodipicolinate from L-aspartate: step 4/4. Catalyzes the conversion of 4-hydroxy-tetrahydrodipicolinate (HTPA) to tetrahydrodipicolinate. This Lactiplantibacillus plantarum (strain ATCC BAA-793 / NCIMB 8826 / WCFS1) (Lactobacillus plantarum) protein is 4-hydroxy-tetrahydrodipicolinate reductase.